A 511-amino-acid polypeptide reads, in one-letter code: Cobyric acid synthase (511 aa).

Residues 251–443 (LLDIAIICLP…IHGIFDNDVF (193 aa)) enclose the GATase cobBQ-type domain. Catalysis depends on C332, which acts as the Nucleophile. The active site involves H435.

Belongs to the CobB/CobQ family. CobQ subfamily.

Its pathway is cofactor biosynthesis; adenosylcobalamin biosynthesis. In terms of biological role, catalyzes amidations at positions B, D, E, and G on adenosylcobyrinic A,C-diamide. NH(2) groups are provided by glutamine, and one molecule of ATP is hydrogenolyzed for each amidation. In Listeria monocytogenes serotype 4a (strain HCC23), this protein is Cobyric acid synthase.